The following is a 418-amino-acid chain: Trafficking protein particle complex subunit 13 (418 aa).

The protein belongs to the TRAPPC13 family. Part of the multisubunit TRAPP (transport protein particle) complex.

This Rattus norvegicus (Rat) protein is Trafficking protein particle complex subunit 13 (Trappc13).